The chain runs to 63 residues: Large ribosomal subunit protein uL30 (63 aa).

This sequence belongs to the universal ribosomal protein uL30 family. As to quaternary structure, part of the 50S ribosomal subunit.

The polypeptide is Large ribosomal subunit protein uL30 (Stenotrophomonas maltophilia (strain K279a)).